Here is a 327-residue protein sequence, read N- to C-terminus: uncharacterized protein (327 aa).

The first 24 residues, 1 to 24 (MAMACLCLANISWATVCANSTGVA), serve as a signal peptide directing secretion.

It belongs to the fimbrial protein family.

It localises to the fimbrium. Functionally, part of the sfmACDHF fimbrial operon. Could contribute to adhesion to various surfaces in specific environmental niches. Increases adhesion to eukaryotic T24 bladder epithelial cells in the absence of fim genes. This is an uncharacterized protein from Escherichia coli (strain K12).